The sequence spans 457 residues: Siroheme synthase (457 aa).

The precorrin-2 dehydrogenase /sirohydrochlorin ferrochelatase stretch occupies residues 1–204 (MDHLPIFCQL…NDQKAITETT (204 aa)). Residues 22 to 23 (DV) and 43 to 44 (LA) contribute to the NAD(+) site. Position 128 is a phosphoserine (S128). Positions 216–457 (GEVVLVGAGP…RDKLNWFSNH (242 aa)) are uroporphyrinogen-III C-methyltransferase. P225 serves as a coordination point for S-adenosyl-L-methionine. Catalysis depends on D248, which acts as the Proton acceptor. Residue K270 is the Proton donor of the active site. S-adenosyl-L-methionine contacts are provided by residues 301-303 (GGD), I306, 331-332 (TA), M382, and G411.

In the N-terminal section; belongs to the precorrin-2 dehydrogenase / sirohydrochlorin ferrochelatase family. This sequence in the C-terminal section; belongs to the precorrin methyltransferase family.

The enzyme catalyses uroporphyrinogen III + 2 S-adenosyl-L-methionine = precorrin-2 + 2 S-adenosyl-L-homocysteine + H(+). It carries out the reaction precorrin-2 + NAD(+) = sirohydrochlorin + NADH + 2 H(+). It catalyses the reaction siroheme + 2 H(+) = sirohydrochlorin + Fe(2+). It functions in the pathway cofactor biosynthesis; adenosylcobalamin biosynthesis; precorrin-2 from uroporphyrinogen III: step 1/1. The protein operates within cofactor biosynthesis; adenosylcobalamin biosynthesis; sirohydrochlorin from precorrin-2: step 1/1. Its pathway is porphyrin-containing compound metabolism; siroheme biosynthesis; precorrin-2 from uroporphyrinogen III: step 1/1. It participates in porphyrin-containing compound metabolism; siroheme biosynthesis; siroheme from sirohydrochlorin: step 1/1. It functions in the pathway porphyrin-containing compound metabolism; siroheme biosynthesis; sirohydrochlorin from precorrin-2: step 1/1. Its function is as follows. Multifunctional enzyme that catalyzes the SAM-dependent methylations of uroporphyrinogen III at position C-2 and C-7 to form precorrin-2 via precorrin-1. Then it catalyzes the NAD-dependent ring dehydrogenation of precorrin-2 to yield sirohydrochlorin. Finally, it catalyzes the ferrochelation of sirohydrochlorin to yield siroheme. The chain is Siroheme synthase from Shigella boydii serotype 18 (strain CDC 3083-94 / BS512).